The primary structure comprises 249 residues: MHEGYKVKLDTFEGPLDLLLHLINQFEIDIYDIPVAQITQQYMEYIHTMQHLELNIASEYLVMASTLLAIKSQMLLPKQELEDDLDEEYMEDPREELMQRLIEYRKYKEIAERLKEKESEDNQLYTRPPVVFEFKDIPEKITTNQTDISIFDMVGALKNMLKRKEWTEPHDTTVQRMDIPIETRMKEVLQQVQSNSDGLVFDKLFPSPTKNYIVVTFVAVLELMKDKQIYAVQERHFEELYLYSMEEST.

It belongs to the ScpA family. As to quaternary structure, component of a cohesin-like complex composed of ScpA, ScpB and the Smc homodimer, in which ScpA and ScpB bind to the head domain of Smc. The presence of the three proteins is required for the association of the complex with DNA.

The protein resides in the cytoplasm. Participates in chromosomal partition during cell division. May act via the formation of a condensin-like complex containing Smc and ScpB that pull DNA away from mid-cell into both cell halves. This chain is Segregation and condensation protein A, found in Oceanobacillus iheyensis (strain DSM 14371 / CIP 107618 / JCM 11309 / KCTC 3954 / HTE831).